Here is a 381-residue protein sequence, read N- to C-terminus: Phenylalanine dehydrogenase (381 aa).

Residue arginine 55 coordinates NAD(+). Residue lysine 79 coordinates L-phenylalanine. Lysine 91 is an active-site residue. NAD(+) is bound by residues aspartate 126, serine 157, threonine 161, 191–197 (GLGKVGY), 214–215 (DI), 254–255 (AM), and 275–277 (SAN). Position 277 (asparagine 277) interacts with L-phenylalanine.

Belongs to the Glu/Leu/Phe/Val dehydrogenases family.

It carries out the reaction L-phenylalanine + NAD(+) + H2O = 3-phenylpyruvate + NH4(+) + NADH + H(+). It participates in amino-acid biosynthesis; L-phenylalanine biosynthesis; L-phenylalanine from phenylpyruvate (PDH route): step 1/1. In terms of biological role, catalyzes the reversible NAD(+)-dependent oxidative deamination of L-phenylalanine to phenylpyruvate. This Lysinibacillus sphaericus (Bacillus sphaericus) protein is Phenylalanine dehydrogenase.